Here is a 366-residue protein sequence, read N- to C-terminus: Alanine racemase (366 aa).

The active-site Proton acceptor; specific for D-alanine is the K40. K40 is modified (N6-(pyridoxal phosphate)lysine). R136 serves as a coordination point for substrate. Y263 serves as the catalytic Proton acceptor; specific for L-alanine. Residue M310 participates in substrate binding.

It belongs to the alanine racemase family. It depends on pyridoxal 5'-phosphate as a cofactor.

The enzyme catalyses L-alanine = D-alanine. The protein operates within amino-acid biosynthesis; D-alanine biosynthesis; D-alanine from L-alanine: step 1/1. Its function is as follows. Catalyzes the interconversion of L-alanine and D-alanine. May also act on other amino acids. The polypeptide is Alanine racemase (alr) (Streptococcus pyogenes serotype M5 (strain Manfredo)).